The primary structure comprises 380 residues: Putative T-box protein 40 (380 aa).

A DNA-binding region (T-box) is located at residues 11–192; that stretch reads MAEEDRWLTQ…KNATFENRLD (182 aa). Residues 188 to 215 are disordered; it reads ENRLDGGNKRKNTNSREEPSSKRSKNET. Positions 189–215 are enriched in basic and acidic residues; the sequence is NRLDGGNKRKNTNSREEPSSKRSKNET.

It is found in the nucleus. In Caenorhabditis elegans, this protein is Putative T-box protein 40 (tbx-40).